A 146-amino-acid polypeptide reads, in one-letter code: Ribosome-binding factor A (146 aa).

The segment at 121–146 (KQQQFGSADDVTENDIDEADDTEGKA) is disordered. A compositionally biased stretch (acidic residues) spans 130–146 (DVTENDIDEADDTEGKA).

It belongs to the RbfA family. As to quaternary structure, monomer. Binds 30S ribosomal subunits, but not 50S ribosomal subunits or 70S ribosomes.

The protein resides in the cytoplasm. One of several proteins that assist in the late maturation steps of the functional core of the 30S ribosomal subunit. Associates with free 30S ribosomal subunits (but not with 30S subunits that are part of 70S ribosomes or polysomes). Required for efficient processing of 16S rRNA. May interact with the 5'-terminal helix region of 16S rRNA. The chain is Ribosome-binding factor A from Shewanella sp. (strain MR-4).